Here is a 942-residue protein sequence, read N- to C-terminus: Mitogen-activated protein kinase kinase kinase A (942 aa).

One can recognise a PB1 domain in the interval 15 to 96 (FIRIKCILGD…NPTKIISTKF (82 aa)). The interval 107 to 144 (PLSSSLSPTQSLILNNNNNNNNNNNNNNNNNNNNNNNN) is disordered. In terms of domain architecture, Protein kinase spans 170 to 429 (WQKGQILGRG…ANQLLKHPFI (260 aa)). Residues 176–184 (LGRGGYGSV) and Lys-199 each bind ATP. The active-site Proton acceptor is Asp-297. The span at 441-486 (ISPTTTLSTNTTNTTATTTTTNNATNSNINQQQQQQQQQPPTRTQR) shows a compositional bias: low complexity. The segment at 441–512 (ISPTTTLSTN…ISTSTSSSSS (72 aa)) is disordered. Residues 487 to 498 (VSISAGSSNNKR) are compositionally biased toward polar residues. Low complexity predominate over residues 500 to 512 (TPPISTSTSSSSS). The helical transmembrane segment at 513–533 (SILNNFSINIILPINLIILIF) threads the bilayer. The region spanning 518-564 (FSINIILPINLIILIFREIKPNFVNTLSRVCKHWKQIIDDDELWNKY) is the F-box domain. WD repeat units follow at residues 607–646 (GHDKGVFCVKLIDDQGMVLSGGEDKKLKVWDISGNHHHNH), 690–733 (GHSG…TLFT), 736–778 (NHQE…STLR), 780–825 (HTGG…KVRS), 828–865 (QHTEDVLCCYVFDQKVVTGSCDGTIKLWDIGTGKTIST), 872–909 (RQKNYVWTVQFDQSKIISSGKTGIIRIWDIYNERDSRS), and 912–942 (GHHETIFSLQFNNQKLITGSLDKLVKIWSID).

Belongs to the protein kinase superfamily. STE Ser/Thr protein kinase family. MAP kinase kinase kinase subfamily. As to quaternary structure, interacts with ubcB and ubpB. Requires Mg(2+) as cofactor. Post-translationally, ubcB and ubpB differentially control ubiquitination/deubiquitination and degradation in a cell-type-specific and temporally regulated manner.

Its subcellular location is the membrane. It catalyses the reaction L-seryl-[protein] + ATP = O-phospho-L-seryl-[protein] + ADP + H(+). The catalysed reaction is L-threonyl-[protein] + ATP = O-phospho-L-threonyl-[protein] + ADP + H(+). In terms of biological role, regulates cell-type differentiation and spatial patterning, required for the proper induction and maintenance of prespore cell differentiation. This chain is Mitogen-activated protein kinase kinase kinase A, found in Dictyostelium discoideum (Social amoeba).